A 309-amino-acid polypeptide reads, in one-letter code: Dihydroorotate dehydrogenase B (NAD(+)), catalytic subunit (309 aa).

Residues Ser21 and 45 to 46 contribute to the FMN site; that span reads KA. Residues Lys45 and 69–73 each bind substrate; that span reads NAIGL. Residues Asn99 and Asn127 each contribute to the FMN site. Asn127 contacts substrate. Catalysis depends on Cys130, which acts as the Nucleophile. Lys165 and Ile191 together coordinate FMN. Position 192–193 (192–193) interacts with substrate; it reads NT. FMN is bound by residues Gly217, 243 to 244, and 265 to 266; these read GG and GT.

It belongs to the dihydroorotate dehydrogenase family. Type 1 subfamily. As to quaternary structure, heterotetramer of 2 PyrK and 2 PyrD type B subunits. FMN serves as cofactor.

Its subcellular location is the cytoplasm. It catalyses the reaction (S)-dihydroorotate + NAD(+) = orotate + NADH + H(+). Its pathway is pyrimidine metabolism; UMP biosynthesis via de novo pathway; orotate from (S)-dihydroorotate (NAD(+) route): step 1/1. Catalyzes the conversion of dihydroorotate to orotate with NAD(+) as electron acceptor. The polypeptide is Dihydroorotate dehydrogenase B (NAD(+)), catalytic subunit (pyrD) (Bacillus cytotoxicus (strain DSM 22905 / CIP 110041 / 391-98 / NVH 391-98)).